The sequence spans 495 residues: UDP-N-acetylmuramoyl-L-alanyl-D-glutamate--2,6-diaminopimelate ligase (495 aa).

UDP-N-acetyl-alpha-D-muramoyl-L-alanyl-D-glutamate is bound by residues leucine 27, serine 29, and 44 to 46; that span reads HQA. 116 to 122 lines the ATP pocket; the sequence is GTNGKTT. UDP-N-acetyl-alpha-D-muramoyl-L-alanyl-D-glutamate is bound by residues asparagine 157, 158-159, serine 185, glutamine 191, and arginine 193; that span reads TT. Lysine 225 carries the N6-carboxylysine modification. Residues arginine 390, 414-417, glycine 465, and glutamate 469 each bind meso-2,6-diaminopimelate; that span reads DNPR. A Meso-diaminopimelate recognition motif motif is present at residues 414–417; the sequence is DNPR.

It belongs to the MurCDEF family. MurE subfamily. The cofactor is Mg(2+). Post-translationally, carboxylation is probably crucial for Mg(2+) binding and, consequently, for the gamma-phosphate positioning of ATP.

It localises to the cytoplasm. It carries out the reaction UDP-N-acetyl-alpha-D-muramoyl-L-alanyl-D-glutamate + meso-2,6-diaminopimelate + ATP = UDP-N-acetyl-alpha-D-muramoyl-L-alanyl-gamma-D-glutamyl-meso-2,6-diaminopimelate + ADP + phosphate + H(+). It functions in the pathway cell wall biogenesis; peptidoglycan biosynthesis. Its function is as follows. Catalyzes the addition of meso-diaminopimelic acid to the nucleotide precursor UDP-N-acetylmuramoyl-L-alanyl-D-glutamate (UMAG) in the biosynthesis of bacterial cell-wall peptidoglycan. This chain is UDP-N-acetylmuramoyl-L-alanyl-D-glutamate--2,6-diaminopimelate ligase, found in Salmonella paratyphi A (strain ATCC 9150 / SARB42).